The chain runs to 570 residues: Putative diflavin flavoprotein A 5 (570 aa).

The segment at 38–231 (ERGTTSNSYV…LQVRLYAVGH (194 aa)) is zinc metallo-hydrolase. Residues 260-402 (VALLYASAYG…VGTDFAQTLK (143 aa)) form the Flavodoxin-like domain. Positions 421-570 (VGRIVGSVCV…INHRKTGNHY (150 aa)) are flavodoxin-reductase-like.

In the N-terminal section; belongs to the zinc metallo-hydrolase group 3 family. This sequence in the C-terminal section; belongs to the flavodoxin reductase family. Requires Fe cation as cofactor.

Functionally, mediates electron transfer from NADH to oxygen, reducing it to water. This modular protein has 3 redox cofactors, in other organisms the same activity requires 2 or 3 proteins. The polypeptide is Putative diflavin flavoprotein A 5 (dfa5) (Nostoc sp. (strain PCC 7120 / SAG 25.82 / UTEX 2576)).